Consider the following 687-residue polypeptide: Geranylgeranyl transferase type-2 subunit alpha 2 (687 aa).

5 PFTA repeats span residues 38–72 (YTKE…SRLD), 83–117 (IIDE…KKGH), 132–167 (YQKQ…LTKT), 168–203 (SEED…SLVA), and 214–248 (TIRR…QTVK). LRR repeat units lie at residues 523–545 (MNNI…VEKL), 546–567 (LFVQ…LEAM), 568–591 (QLLC…SLRH), 592–616 (LKQL…TTRY), and 646–668 (LMKL…EFSS).

It belongs to the protein prenyltransferase subunit alpha family. In terms of assembly, heterotrimer composed of the alpha subunit RGTA, the beta subunit RGTB and REP; within this trimer, RGTA and RGTB form the catalytic component, while REP mediates peptide substrate binding.

The enzyme catalyses geranylgeranyl diphosphate + L-cysteinyl-[protein] = S-geranylgeranyl-L-cysteinyl-[protein] + diphosphate. Its activity is regulated as follows. The enzymatic reaction requires the aid of the Rab escort protein REP. Functionally, catalyzes the transfer of a geranylgeranyl moiety from geranylgeranyl diphosphate to both cysteines of Rab proteins with the C-terminal sequence -CCXX, CXXX, -XCCX and -XCXC, such as RABA1A, RABA2A, RABF2A and RABG2. Does not seem to be a functional Rab-GGT alpha subunit in vitro. This chain is Geranylgeranyl transferase type-2 subunit alpha 2, found in Arabidopsis thaliana (Mouse-ear cress).